The primary structure comprises 112 residues: Large ribosomal subunit protein uL22 (112 aa).

The protein belongs to the universal ribosomal protein uL22 family. In terms of assembly, part of the 50S ribosomal subunit.

In terms of biological role, this protein binds specifically to 23S rRNA; its binding is stimulated by other ribosomal proteins, e.g. L4, L17, and L20. It is important during the early stages of 50S assembly. It makes multiple contacts with different domains of the 23S rRNA in the assembled 50S subunit and ribosome. The globular domain of the protein is located near the polypeptide exit tunnel on the outside of the subunit, while an extended beta-hairpin is found that lines the wall of the exit tunnel in the center of the 70S ribosome. This is Large ribosomal subunit protein uL22 from Moorella thermoacetica (strain ATCC 39073 / JCM 9320).